The primary structure comprises 118 residues: MGDKEFMWALKNGDLDAVKEFVAGGVDVNRTLEGGRKPLHYAADCGQDEIVEFLLAKGANINAADKHGITPLLSACYEGHRKCVELFVSKGADKNVKGPDGLNAFESTDNQAIKDLLH.

ANK repeat units lie at residues 1–30, 34–65, and 67–98; these read MGDKEFMWALKNGDLDAVKEFVAGGVDVNR, GGRKPLHYAADCGQDEIVEFLLAKGANINAAD, and HGITPLLSACYEGHRKCVELFVSKGADKNVKG.

This sequence belongs to the myotrophin family.

The protein localises to the cytoplasm. Its subcellular location is the nucleus. It is found in the perinuclear region. Regulates NF-kappa-B transcription factor activity. Promotes growth of cardiomyocytes, but not cardiomyocyte proliferation. Promotes cardiac muscle hypertrophy. Plays a role in the regulation of the growth of actin filaments. Inhibits the activity of the F-actin-capping protein complex. This Xenopus laevis (African clawed frog) protein is Myotrophin (mtpn).